Consider the following 402-residue polypeptide: Phosphopentomutase (402 aa).

Mn(2+) contacts are provided by Asp10, Asp301, His306, Asp342, His343, and His354.

The protein belongs to the phosphopentomutase family. Mn(2+) is required as a cofactor.

It localises to the cytoplasm. It carries out the reaction 2-deoxy-alpha-D-ribose 1-phosphate = 2-deoxy-D-ribose 5-phosphate. The enzyme catalyses alpha-D-ribose 1-phosphate = D-ribose 5-phosphate. The protein operates within carbohydrate degradation; 2-deoxy-D-ribose 1-phosphate degradation; D-glyceraldehyde 3-phosphate and acetaldehyde from 2-deoxy-alpha-D-ribose 1-phosphate: step 1/2. Functionally, isomerase that catalyzes the conversion of deoxy-ribose 1-phosphate (dRib-1-P) and ribose 1-phosphate (Rib-1-P) to deoxy-ribose 5-phosphate (dRib-5-P) and ribose 5-phosphate (Rib-5-P), respectively. The polypeptide is Phosphopentomutase (Aeromonas hydrophila subsp. hydrophila (strain ATCC 7966 / DSM 30187 / BCRC 13018 / CCUG 14551 / JCM 1027 / KCTC 2358 / NCIMB 9240 / NCTC 8049)).